A 46-amino-acid polypeptide reads, in one-letter code: Defensin-like protein AX1 (46 aa).

4 disulfides stabilise this stretch: cysteine 3-cysteine 46, cysteine 14-cysteine 34, cysteine 20-cysteine 40, and cysteine 24-cysteine 42.

In terms of tissue distribution, leaves and flowers.

In terms of biological role, strong inhibiting activity against C.beticola and other filamentous fungi. Little or no effect against bacteria. The sequence is that of Defensin-like protein AX1 from Beta vulgaris (Sugar beet).